The sequence spans 55 residues: Large ribosomal subunit protein bL33 (55 aa).

Positions 1 to 11 are enriched in basic and acidic residues; it reads MAKGARDKIKL. Residues 1 to 24 are disordered; sequence MAKGARDKIKLESTAGTGHFYTTT. Residues 14–24 are compositionally biased toward polar residues; the sequence is TAGTGHFYTTT.

The protein belongs to the bacterial ribosomal protein bL33 family.

This Burkholderia multivorans (strain ATCC 17616 / 249) protein is Large ribosomal subunit protein bL33.